A 406-amino-acid polypeptide reads, in one-letter code: Tryptophan 2,3-dioxygenase A (406 aa).

Residues 71 to 75 (FIVTH) and Arg143 each bind substrate. A heme-binding site is contributed by His327. Substrate is bound at residue Thr341.

This sequence belongs to the tryptophan 2,3-dioxygenase family. Homotetramer. Dimer of dimers. Requires heme as cofactor.

It carries out the reaction L-tryptophan + O2 = N-formyl-L-kynurenine. It participates in amino-acid degradation; L-tryptophan degradation via kynurenine pathway; L-kynurenine from L-tryptophan: step 1/2. In terms of biological role, heme-dependent dioxygenase that catalyzes the oxidative cleavage of the L-tryptophan (L-Trp) pyrrole ring and converts L-tryptophan to N-formyl-L-kynurenine. Catalyzes the oxidative cleavage of the indole moiety. This chain is Tryptophan 2,3-dioxygenase A, found in Danio rerio (Zebrafish).